The chain runs to 669 residues: Hypoxia-inducible factor 3-alpha (669 aa).

The interval 1 to 27 (MALGLQRARSTTELRKEKSRDAARSRR) is disordered. The segment covering 10–27 (STTELRKEKSRDAARSRR) has biased composition (basic and acidic residues). The bHLH domain maps to 14 to 67 (LRKEKSRDAARSRRSQETEVLYQLAHTLPFARGVSAHLDKASIMRLTISYLRMH). Positions 77-100 (QVGAGGEPLDACYLKALEGFVMVL) are nuclear localization signal. 2 PAS domains span residues 82–154 (GEPL…LSRR) and 227–297 (PHPG…LSKG). Residues 230–274 (GSLEPPLGRGAFLSRHSLDMKFTYCDDRIAEVAGYSPDDLIGCSA) are nuclear export signal. The interval 354-389 (EQTEQHSRRPIQRGAPSQKDTPNPGDSLDTPGPRIL) is disordered. The LRRLL motif lies at 414–418 (LRRLL). Polar residues predominate over residues 430-444 (TPSTPLATRHPQSPL). The segment at 430-451 (TPSTPLATRHPQSPLSADLPDE) is disordered. The interval 452–581 (LPVGTENVHR…TLAQSSEDED (130 aa)) is ODD. The interval 454 to 506 (VGTENVHRLFTSGKDTEAVETDLDIAQDADALDLEMLAPYISMDDDFQLNASE) is NTAD. Lysine 467 is covalently cross-linked (Glycyl lysine isopeptide (Lys-Gly) (interchain with G-Cter in ubiquitin)). The LAPYISMD signature appears at 490–497 (LAPYISMD). Residue proline 492 is modified to 4-hydroxyproline. 2 disordered regions span residues 523–600 (RARS…SPEH) and 619–669 (APGS…AQAD). 2 stretches are compositionally biased toward low complexity: residues 530–541 (LSPPALEPSLLP) and 550–564 (SCSS…ASSP). Residue lysine 570 forms a Glycyl lysine isopeptide (Lys-Gly) (interchain with G-Cter in ubiquitin) linkage. Residues 629-646 (PLLNLNEPLGLGPSLLSP) show a composition bias toward low complexity.

In terms of assembly, isoform 2 interacts (via ODD domain) with VHL (via beta domain). Isoform 4 interacts with HIF1A; the interaction inhibits the binding of HIF1A to hypoxia-responsive element (HRE) and HIF1A/ARNT-dependent transcriptional activation. Isoform 4 interacts with ARNT; the interaction occurs in a HIF1A- and DNA-binding-independent manner and does not induce HIF1A/ARNT-dependent transcriptional activation. Isoform 4 interacts with EPAS1. Interacts with BAD, BCL2L2 and MCL1. In terms of processing, in normoxia, hydroxylated on Pro-492 in the oxygen-dependent degradation domain (ODD) by prolyl hydroxylase(s) (PHD). The hydroxylated proline promotes interaction with VHL, initiating rapid ubiquitination and subsequent proteasomal degradation. Ubiquitinated; ubiquitination occurs in a VHL- and oxygen-dependent pathway and subsequently targeted for proteasomal degradation. As to expression, expressed in vascular cells (at protein level). Expressed in kidney. Expressed in lung epithelial cells. Expressed in endothelial cells (venous and arterial cells from umbilical cord and aortic endothelial cells) and in vascular smooth muscle cells (aorta). Strongly expressed in the heart, placenta, and skeletal muscle, whereas a weak expression profile was found in the lung, liver, and kidney. Expressed weakly in cell renal cell carcinoma (CC-RCC) compared to normal renal cells. Expression is down-regulated in numerous kidney tumor cells compared to non tumor kidney tissues. Isoform 2 is expressed in heart, placenta, lung, liver, skeletal muscle and pancreas and in numerous cancer cell lines. Isoform 3 and isoform 4 are weakly expressed in heart, placenta, lung, liver, skeletal muscle and pancreas. Isoform 4 is expressed in fetal tissues, such as heart, brain, thymus, lung, liver, skeletal kidney and spleen. Isoform 3 is weakly expressed in fetal tissues, such as liver and kidney.

The protein resides in the nucleus. The protein localises to the cytoplasm. Its subcellular location is the nucleus speckle. It localises to the mitochondrion. In terms of biological role, acts as a transcriptional regulator in adaptive response to low oxygen tension. Acts as a regulator of hypoxia-inducible gene expression. Functions as an inhibitor of angiogenesis in hypoxic cells of the cornea. Plays a role in the development of the cardiorespiratory system. May also be involved in apoptosis. Attenuates the ability of transcription factor HIF1A to bind to hypoxia-responsive elements (HRE) located within the enhancer/promoter of hypoxia-inducible target genes and hence inhibits HRE-driven transcriptional activation. Also inhibits hypoxia-inducible ARNT-mediated gene expression. Its function is as follows. Attenuates the ability of transcription factor HIF1A to bind to hypoxia-responsive elements (HRE) located within the enhancer/promoter of hypoxia-inducible target genes and hence inhibits HRE-driven transcriptional activation. Functionally, attenuates the ability of transcription factor HIF1A and EPAS1/HIF2A to bind to hypoxia-responsive elements (HRE) located within the enhancer/promoter of hypoxia-inducible target genes and hence inhibits HRE-driven transcriptional activation. May act as a tumor suppressor and inhibits malignant cell transformation. This chain is Hypoxia-inducible factor 3-alpha, found in Homo sapiens (Human).